Consider the following 148-residue polypeptide: Ribose-5-P isomerase B (148 aa).

8–9 contacts D-ribulose 5-phosphate; the sequence is DE. The active-site Proton acceptor is Cys-65. Residues 66-70, Asn-99, Arg-132, and Lys-136 each bind D-ribulose 5-phosphate; that span reads GTGIG.

It belongs to the LacAB/RpiB family.

The enzyme catalyses aldehydo-D-ribose 5-phosphate = D-ribulose 5-phosphate. The protein operates within carbohydrate degradation; pentose phosphate pathway; D-ribose 5-phosphate from D-ribulose 5-phosphate (non-oxidative stage): step 1/1. Functionally, catalyzes the interconversion of ribulose-5-P and ribose-5-P. The polypeptide is Ribose-5-P isomerase B (Listeria innocua serovar 6a (strain ATCC BAA-680 / CLIP 11262)).